Here is a 1175-residue protein sequence, read N- to C-terminus: Solute carrier family 9 member C1 (1175 aa).

The Extracellular segment spans residues 1-39 (MEMEEISENLTASHSIKLTNMWLELLKSVFLSTPQDLPE). A helical membrane pass occupies residues 40–59 (IILILSLICTVGAFLNMHLK). Over 60–64 (DFPIP) the chain is Cytoplasmic. Residues 65 to 82 (LPVILFLIGCCFEILSFA) traverse the membrane as a helical segment. Over 83-98 (STQIQIYADAIQWMDP) the chain is Extracellular. Residues 99–115 (DIFFGIFTPVIIFNVAF) traverse the membrane as a helical segment. Topologically, residues 116–125 (DMDIYMLQKL) are cytoplasmic. The chain crosses the membrane as a helical span at residues 126-151 (FWQILVITIPGFLINYTLILWYLQSV). The segment at 126–213 (FWQILVITIP…SLVIYSGVVH (88 aa)) is transport core domain. Residues 152 to 157 (NKLSLK) lie on the Extracellular side of the membrane. A helical transmembrane segment spans residues 158 to 183 (TVPWLLFSAVLISSDPMLTSASIRDL). At 184–186 (GLS) the chain is on the cytoplasmic side. A helical transmembrane segment spans residues 187-212 (RSLTNLINGESLLTSVLSLVIYSGVV). The Extracellular segment spans residues 213-225 (HIRFKSKSVNHTL). A helical transmembrane segment spans residues 226–257 (AHKVMSTAWSYIVESFITGIVFTKVIQLWMAT). At 258 to 261 (IFGD) the chain is on the cytoplasmic side. A helical transmembrane segment spans residues 262–283 (DVNHITLIFSVLYLIFYVCELV). Topologically, residues 284–286 (GMS) are extracellular. The helical transmembrane segment at 287-300 (GIFTLATIGLFLNS) threads the bilayer. Over 301–307 (TSFKPGV) the chain is Cytoplasmic. A helical transmembrane segment spans residues 308–339 (EAFLLEFWNCLSFIGFLMVFTFIGLLIPAHTY). At 340-344 (LHISF) the chain is on the extracellular side. The helical transmembrane segment at 345–374 (SDVYYSLNIYFTLIVLRLLVFLLMSPILSR) threads the bilayer. A transport core domain region spans residues 345–446 (SDVYYSLNIY…FILPMAVTKL (102 aa)). At 375–380 (LGHGFS) the chain is on the cytoplasmic side. The helical transmembrane segment at 381–411 (WRWAFIMVWSEMKGTPNINMALLLAYSDISL) threads the bilayer. At 412–415 (GSER) the chain is on the extracellular side. Residues 416 to 446 (ERSQILFHGVSVCVITLIVNRFILPMAVTKL) form a helical membrane-spanning segment. Over 447-632 (GLRDVTSTKY…ACHRIVFTNE (186 aa)) the chain is Cytoplasmic. The segment at 618 to 698 (YMFLHACHRI…EFFSHTWLLF (81 aa)) is ion transport-like. The chain crosses the membrane as a helical span at residues 633–653 (FEYTGYLVVLMSTYPMIICWI). Residues 654–657 (SRLK) lie on the Extracellular side of the membrane. The chain crosses the membrane as a helical span at residues 658–684 (DIYDNEIKCANYYFLAFYILEALLKVA). Residues 685 to 691 (AMRKEFF) lie on the Cytoplasmic side of the membrane. Residues 692–716 (SHTWLLFELGITLVGVLDIILIETD) form a helical membrane-spanning segment. At 717–724 (SISYNFDL) the chain is on the extracellular side. Residues 725-751 (TETVVFMNVIRLLRILRILKLVTPKLL) traverse the membrane as a helical segment. At 752-1175 (QIIDKRMSQQ…EELIEENINI (424 aa)) the chain is on the cytoplasmic side. Residues 1137–1146 (MKPDSERESF) show a composition bias toward basic and acidic residues. Residues 1137–1175 (MKPDSERESFETLDETSEEDNGKKENQENEELIEENINI) are disordered. A compositionally biased stretch (acidic residues) spans 1164–1175 (ENEELIEENINI).

The protein belongs to the monovalent cation:proton antiporter 1 (CPA1) transporter (TC 2.A.36) family. In terms of assembly, interacts with soluble adenylyl cyclase (sAC). As to expression, testis-specific. Specifically present in the principal piece of sperm tail (at protein level).

It is found in the cell projection. The protein resides in the cilium. It localises to the flagellum membrane. Sperm-specific solute carrier involved in intracellular pH regulation of spermatozoa. Required for sperm motility and fertility. Involved in sperm cell hyperactivation, a step needed for sperm motility which is essential late in the preparation of sperm for fertilization. Required for the expression and bicarbonate regulation of the soluble adenylyl cyclase (sAC). This chain is Solute carrier family 9 member C1 (Slc9c1), found in Mus musculus (Mouse).